The following is a 282-amino-acid chain: 4-hydroxy-3-methylbut-2-enyl diphosphate reductase (282 aa).

Residue Cys14 coordinates [4Fe-4S] cluster. Residues His43 and His78 each coordinate (2E)-4-hydroxy-3-methylbut-2-enyl diphosphate. Dimethylallyl diphosphate contacts are provided by His43 and His78. Residues His43 and His78 each coordinate isopentenyl diphosphate. Cys100 is a [4Fe-4S] cluster binding site. His128 is a (2E)-4-hydroxy-3-methylbut-2-enyl diphosphate binding site. Residue His128 coordinates dimethylallyl diphosphate. Residue His128 participates in isopentenyl diphosphate binding. The active-site Proton donor is the Glu130. Thr164 contacts (2E)-4-hydroxy-3-methylbut-2-enyl diphosphate. Cys192 contacts [4Fe-4S] cluster. 4 residues coordinate (2E)-4-hydroxy-3-methylbut-2-enyl diphosphate: Ser220, Ser221, Asn222, and Ser266. Residues Ser220, Ser221, Asn222, and Ser266 each coordinate dimethylallyl diphosphate. Isopentenyl diphosphate contacts are provided by Ser220, Ser221, Asn222, and Ser266.

The protein belongs to the IspH family. [4Fe-4S] cluster is required as a cofactor.

The catalysed reaction is isopentenyl diphosphate + 2 oxidized [2Fe-2S]-[ferredoxin] + H2O = (2E)-4-hydroxy-3-methylbut-2-enyl diphosphate + 2 reduced [2Fe-2S]-[ferredoxin] + 2 H(+). It carries out the reaction dimethylallyl diphosphate + 2 oxidized [2Fe-2S]-[ferredoxin] + H2O = (2E)-4-hydroxy-3-methylbut-2-enyl diphosphate + 2 reduced [2Fe-2S]-[ferredoxin] + 2 H(+). Its pathway is isoprenoid biosynthesis; dimethylallyl diphosphate biosynthesis; dimethylallyl diphosphate from (2E)-4-hydroxy-3-methylbutenyl diphosphate: step 1/1. It functions in the pathway isoprenoid biosynthesis; isopentenyl diphosphate biosynthesis via DXP pathway; isopentenyl diphosphate from 1-deoxy-D-xylulose 5-phosphate: step 6/6. Functionally, catalyzes the conversion of 1-hydroxy-2-methyl-2-(E)-butenyl 4-diphosphate (HMBPP) into a mixture of isopentenyl diphosphate (IPP) and dimethylallyl diphosphate (DMAPP). Acts in the terminal step of the DOXP/MEP pathway for isoprenoid precursor biosynthesis. This is 4-hydroxy-3-methylbut-2-enyl diphosphate reductase from Clostridium perfringens (strain ATCC 13124 / DSM 756 / JCM 1290 / NCIMB 6125 / NCTC 8237 / Type A).